The chain runs to 175 residues: EKC/KEOPS complex subunit TPRKB (175 aa).

It belongs to the CGI121/TPRKB family. Component of the EKC/KEOPS complex.

The protein localises to the cytoplasm. Its subcellular location is the cytosol. It is found in the nucleus. In terms of biological role, component of the EKC/KEOPS complex that is required for the formation of a threonylcarbamoyl group on adenosine at position 37 (t(6)A37) in tRNAs that read codons beginning with adenine. The complex is probably involved in the transfer of the threonylcarbamoyl moiety of threonylcarbamoyl-AMP (TC-AMP) to the N6 group of A37. Tprkb acts as an allosteric effector that regulates the t(6)A activity of the complex. The polypeptide is EKC/KEOPS complex subunit TPRKB (Danio rerio (Zebrafish)).